A 406-amino-acid chain; its full sequence is Tryptophan 2,3-dioxygenase (406 aa).

Residues 72 to 76 and Arg144 contribute to the substrate site; that span reads FIITH. His328 is a heme binding site. Thr342 serves as a coordination point for substrate.

Belongs to the tryptophan 2,3-dioxygenase family. Homotetramer. Dimer of dimers. Requires heme as cofactor.

The catalysed reaction is L-tryptophan + O2 = N-formyl-L-kynurenine. The protein operates within amino-acid degradation; L-tryptophan degradation via kynurenine pathway; L-kynurenine from L-tryptophan: step 1/2. Its function is as follows. Heme-dependent dioxygenase that catalyzes the oxidative cleavage of the L-tryptophan (L-Trp) pyrrole ring and converts L-tryptophan to N-formyl-L-kynurenine. Catalyzes the oxidative cleavage of the indole moiety. This chain is Tryptophan 2,3-dioxygenase, found in Homo sapiens (Human).